Here is a 549-residue protein sequence, read N- to C-terminus: Undecaprenyl phosphate-alpha-4-amino-4-deoxy-L-arabinose arabinosyl transferase 2 (549 aa).

Transmembrane regions (helical) follow at residues 9 to 29, 80 to 102, 112 to 132, 133 to 153, 176 to 196, 204 to 224, 259 to 279, 290 to 310, 312 to 332, 342 to 362, 377 to 397, and 402 to 422; these read LLLG…GLWI, LFGV…FLIA, SFVC…AGYA, NLDP…WFAL, FMTK…PWML, LLLY…PWAL, FYLP…PVAF, GIAF…LSNG, LPTY…HALA, ALGL…IGLV, SLVL…LQAF, and CWAA…AALP.

The protein belongs to the glycosyltransferase 83 family.

Its subcellular location is the cell inner membrane. The enzyme catalyses 4-amino-4-deoxy-alpha-L-arabinopyranosyl di-trans,octa-cis-undecaprenyl phosphate + lipid IVA = lipid IIA + di-trans,octa-cis-undecaprenyl phosphate.. Its pathway is lipopolysaccharide metabolism; 4-amino-4-deoxy-beta-L-arabinose-lipid A biosynthesis. In terms of biological role, catalyzes the transfer of the L-Ara4N moiety of the glycolipid undecaprenyl phosphate-alpha-L-Ara4N to lipid A. The modified arabinose is attached to lipid A and is required for resistance to polymyxin and cationic antimicrobial peptides. The chain is Undecaprenyl phosphate-alpha-4-amino-4-deoxy-L-arabinose arabinosyl transferase 2 from Pseudomonas fluorescens (strain Pf0-1).